The sequence spans 274 residues: Diaminopimelate epimerase (274 aa).

Residues N11 and N76 each contribute to the substrate site. C85 serves as the catalytic Proton donor. Substrate contacts are provided by residues 86–87, N157, N189, and 207–208; these read GN and ER. C216 functions as the Proton acceptor in the catalytic mechanism. 217 to 218 contributes to the substrate binding site; sequence GT.

The protein belongs to the diaminopimelate epimerase family. Homodimer.

It is found in the cytoplasm. The catalysed reaction is (2S,6S)-2,6-diaminopimelate = meso-2,6-diaminopimelate. Its pathway is amino-acid biosynthesis; L-lysine biosynthesis via DAP pathway; DL-2,6-diaminopimelate from LL-2,6-diaminopimelate: step 1/1. In terms of biological role, catalyzes the stereoinversion of LL-2,6-diaminopimelate (L,L-DAP) to meso-diaminopimelate (meso-DAP), a precursor of L-lysine and an essential component of the bacterial peptidoglycan. The chain is Diaminopimelate epimerase from Thermobifida fusca (strain YX).